Reading from the N-terminus, the 336-residue chain is UDP-galactose transporter 1 (336 aa).

9 helical membrane-spanning segments follow: residues 11–31 (LAILQWWGFNVTVIIMNKWIF), 38–58 (FPLSVSCVHFICSSIGAYIVI), 83–103 (FVFCINIVLGNVSLRYIPVSF), 131–151 (IWASLVPIVGGILLTSVTELS), 154–174 (MFGFCAALFGCLATSTKTILA), 193–213 (APFATMILGIPALLLEGSGIL), 227–247 (IIILSSGVLAFCLNFSIFYVI), 254–274 (TFNVAGNLKVAVAVMVSWLIF), and 278–298 (ISYMNAVGCGITLVGCTFYGY).

Belongs to the TPT transporter family. TPT (TC 2.A.7.9) subfamily.

The protein localises to the membrane. Nucleotide sugar transporter that specifically transports UDP-galactose. This is UDP-galactose transporter 1 from Arabidopsis thaliana (Mouse-ear cress).